The following is a 1106-amino-acid chain: Protein transport protein Sec31A (1106 aa).

WD repeat units lie at residues 4–47, 68–111, 120–160, 166–206, 209–254, 258–298, and 301–342; these read KEVD…EIFE, RYHK…AGDK, KHTG…TPMT, QPPE…PIIK, DHSN…SPLR, NHAR…VLYE, and TNTQ…DGLR. The segment at 161–471 is interaction with SEC13; it reads PGAKTQPPED…IDASQTEFEK (311 aa). A WD 8; interaction with SEC13 repeat occupies 397-430; that stretch reads SFSFGGKLVTFENVRMPSHQGAEQQQQQHHVFIS. Ser527 and Ser532 each carry phosphoserine. Lys647 is covalently cross-linked (Glycyl lysine isopeptide (Lys-Gly) (interchain with G-Cter in ubiquitin)). Phosphoserine is present on Ser799. The tract at residues 800–999 is interaction with PDCD6; the sequence is PKIPYEEQQL…TKKITKKPIP (200 aa). The short motif at 842 to 848 is the ALG-2-binding site motif-2 (ABS-2) element; the sequence is GFIMHGN. The disordered stretch occupies residues 859–980; it reads TSPGHMHTQV…EGAPGAPIGN (122 aa). The span at 917-939 shows a compositional bias: polar residues; sequence PQSQMLQQQPSAPVPLSSQSSFP. Phosphothreonine is present on Thr1047. A Phosphoserine modification is found at Ser1049. Lys1103 is covalently cross-linked (Glycyl lysine isopeptide (Lys-Gly) (interchain with G-Cter in ubiquitin)).

Belongs to the WD repeat SEC31 family. COPII is composed of at least 5 proteins: the SEC23/24 complex, the SEC13/31 complex and SAR1. SEC13 and SEC31 make a 2:2 tetramer that forms the edge element of the COPII outer coat. The tetramer self-assembles in multiple copies to form the complete polyhedral cage. Interacts (via WD 8) with SEC13. Interacts with PDCD6; interaction takes place in response to cytosolic calcium increase and leads to bridge together the BCR(KLHL12) complex and SEC31A, leading to monoubiquitination. Interacts with KLHL12. In terms of processing, monoubiquitinated by the BCR(KLHL12) E3 ubiquitin ligase complex, leading to regulate the size of COPII coats.

The protein resides in the cytoplasm. It is found in the cytoplasmic vesicle. Its subcellular location is the COPII-coated vesicle membrane. The protein localises to the endoplasmic reticulum membrane. Functionally, component of the coat protein complex II (COPII) which promotes the formation of transport vesicles from the endoplasmic reticulum (ER). The coat has two main functions, the physical deformation of the endoplasmic reticulum membrane into vesicles and the selection of cargo molecules. The chain is Protein transport protein Sec31A (SEC31A) from Pongo abelii (Sumatran orangutan).